The primary structure comprises 114 residues: MTFKACIAIITALCAMQVICEDDEDYGDLGGCPFLVAENKTGYPTIVACKQDCNGTTETAPNGTRCFSIGDEGLRRMTANLPYDCPLGQCSNGDCIPKETYEVCYRRNWRDKKN.

Positions 1–20 (MTFKACIAIITALCAMQVIC) are cleaved as a signal peptide. 4 cysteine pairs are disulfide-bonded: C32–C53, C49–C90, C66–C95, and C85–C104. N-linked (GlcNAc...) asparagine glycans are attached at residues N39, N54, and N62.

This sequence belongs to the evasin C8 family. As to quaternary structure, monomer.

The protein resides in the secreted. Its function is as follows. Salivary chemokine-binding protein which shows chemokine neutralizing activity and binds to host chemokines CCL3, CCL4 and CCL18. Binds to CCL3 with 1:1 stoichiometry. This chain is Evasin-1, found in Rhipicephalus sanguineus (Brown dog tick).